The primary structure comprises 432 residues: tRNA(Ile)-lysidine synthase (432 aa).

20–25 (SGGLDS) lines the ATP pocket.

It belongs to the tRNA(Ile)-lysidine synthase family.

The protein resides in the cytoplasm. It carries out the reaction cytidine(34) in tRNA(Ile2) + L-lysine + ATP = lysidine(34) in tRNA(Ile2) + AMP + diphosphate + H(+). Ligates lysine onto the cytidine present at position 34 of the AUA codon-specific tRNA(Ile) that contains the anticodon CAU, in an ATP-dependent manner. Cytidine is converted to lysidine, thus changing the amino acid specificity of the tRNA from methionine to isoleucine. This is tRNA(Ile)-lysidine synthase from Shigella flexneri.